A 172-amino-acid polypeptide reads, in one-letter code: NADH-quinone oxidoreductase subunit B (172 aa).

[4Fe-4S] cluster contacts are provided by Cys-46, Cys-47, Cys-111, and Cys-141.

It belongs to the complex I 20 kDa subunit family. NDH-1 is composed of 14 different subunits. Subunits NuoB, C, D, E, F, and G constitute the peripheral sector of the complex. [4Fe-4S] cluster serves as cofactor.

It localises to the cell membrane. The enzyme catalyses a quinone + NADH + 5 H(+)(in) = a quinol + NAD(+) + 4 H(+)(out). NDH-1 shuttles electrons from NADH, via FMN and iron-sulfur (Fe-S) centers, to quinones in the respiratory chain. The immediate electron acceptor for the enzyme in this species is believed to be a menaquinone. Couples the redox reaction to proton translocation (for every two electrons transferred, four hydrogen ions are translocated across the cytoplasmic membrane), and thus conserves the redox energy in a proton gradient. The protein is NADH-quinone oxidoreductase subunit B of Bacillus anthracis (strain A0248).